The chain runs to 49 residues: PEFLEDPSVLTKEKLKSELVANNVTLPAGEQRKEVYVELYLQHLTALKR.

In terms of domain architecture, LEM-like spans 4-47 (LEDPSVLTKEKLKSELVANNVTLPAGEQRKEVYVELYLQHLTAL). Residues 32–36 (RKEVY) are essential for biological activity.

It belongs to the thymopoietin family.

Functionally, hormone of the spleen with pleiotropic actions on prothymocytes, mature T-cells, the nicotinic acetylcholine receptor, and pituitary corticotrophs. This is Splenin (SP) from Bos taurus (Bovine).